The chain runs to 284 residues: Tropomyosin (284 aa).

Residues 1–47 (MDAIKKKMQAMKIEKDNAMDRADAAEEKARQQQERVEKLEEELRDTQ) form a disordered region. Positions 1–284 (MDAIKKKMQA…DQTFQELSGY (284 aa)) form a coiled coil. Positions 12–38 (KIEKDNAMDRADAAEEKARQQQERVEK) are enriched in basic and acidic residues.

This sequence belongs to the tropomyosin family. Homodimer.

Functionally, tropomyosin, in association with the troponin complex, plays a central role in the calcium dependent regulation of muscle contraction. The polypeptide is Tropomyosin (Trichinella pseudospiralis (Parasitic roundworm)).